The primary structure comprises 163 residues: Nucleotide-binding protein MAP_4063c (163 aa).

Belongs to the YajQ family.

Functionally, nucleotide-binding protein. This chain is Nucleotide-binding protein MAP_4063c, found in Mycolicibacterium paratuberculosis (strain ATCC BAA-968 / K-10) (Mycobacterium paratuberculosis).